The primary structure comprises 581 residues: Interleukin-22 receptor subunit alpha-1 (581 aa).

An N-terminal signal peptide occupies residues 1–15 (MRTLLTILAAGSLLA). Residues 16-228 (HITEDTSDLL…VKTLPDRTWT (213 aa)) lie on the Extracellular side of the membrane. Fibronectin type-III domains lie at 18–115 (TEDT…RFSS) and 141–221 (PTYT…RVKT). An intrachain disulfide couples Cys-71 to Cys-79. Asn-80 carries N-linked (GlcNAc...) asparagine glycosylation. An intrachain disulfide couples Cys-128 to Cys-217. The helical transmembrane segment at 229–249 (YSFSGAFLFSLGFLVAGLCYL) threads the bilayer. Over 250–581 (SYRYITKPPP…GLALTVQWES (332 aa)) the chain is Cytoplasmic. Disordered stretches follow at residues 354–493 (QAAP…SSLK) and 539–563 (PSDE…LESP). The segment covering 378–389 (TPQAVSETQLPS) has biased composition (polar residues). Residues Ser-410 and Ser-414 each carry the phosphoserine modification. The segment covering 440–449 (CSPTGLSLQE) has biased composition (polar residues).

Belongs to the type II cytokine receptor family. Heterodimer with IL10RB and with IL20RB. Interacts with FBXW12; the interaction promotes ubiquitination of IL22RA1. In terms of processing, ubiquitinated.

The protein localises to the cell membrane. Functionally, component of the receptor for IL20, IL22 and IL24. Component of IL22 receptor formed by IL22RA1 and IL10RB enabling IL22 signaling via JAK/STAT pathways. IL22 also induces activation of MAPK1/MAPK3 and Akt kinases pathways. Component of one of the receptor for IL20 and IL24 formed by IL22RA1 and IL20RB also signaling through STATs activation. Mediates IL24 antiangiogenic activity as well as IL24 inhibitory effect on endothelial cell tube formation and differentiation. The sequence is that of Interleukin-22 receptor subunit alpha-1 (IL22RA1) from Bos taurus (Bovine).